The sequence spans 810 residues: Protein 4.1 (810 aa).

The disordered stretch occupies residues 1–124; sequence MTTEKSLVAE…KEIEFGTSLD (124 aa). Serine 14 carries the phosphoserine modification. The residue at position 61 (threonine 61) is a Phosphothreonine. The span at 62–76 shows a compositional bias: basic and acidic residues; it reads PTHEDLTKNKERTSE. Phosphoserine is present on residues serine 85, serine 86, serine 96, serine 105, serine 122, serine 150, serine 152, serine 153, serine 189, and serine 192. A compositionally biased stretch (basic and acidic residues) spans 102-118; sequence DVESAKEKCEGGQKEIE. Positions 152–203 are disordered; the sequence is SSAETQPAQEEHREDPDFETKEGGGLEECSKIEVKEESPESKAERELKASQK. The span at 160–200 shows a compositional bias: basic and acidic residues; the sequence is QEEHREDPDFETKEGGGLEECSKIEVKEESPESKAERELKA. In terms of domain architecture, FERM spans 211–492; it reads MHCKVSLLDD…EHHTFFRLTS (282 aa). Phosphotyrosine is present on tyrosine 223. A Phosphothreonine modification is found at threonine 379. A disordered region spans residues 518–613; the sequence is TRQASALIDR…DQAEPEPTEV (96 aa). Serine 522, serine 541, serine 543, and serine 555 each carry phosphoserine. The segment covering 587–601 has biased composition (basic and acidic residues); it reads AQKETVKDEEKKEEG. The tract at residues 615–659 is spectrin--actin-binding; sequence KDLDKSQEEIKKHHASISELKKNFMESVPEPRPSEWDKRLSTHSP. Serine 620, serine 630, serine 655, and serine 658 each carry phosphoserine. A C-terminal (CTD) region spans residues 660 to 810; sequence FRTLNINGQL…VHQETEISEE (151 aa). Phosphothreonine occurs at positions 682 and 805.

In terms of assembly, binds with a high affinity to glycophorin and with lower affinity to band III protein. Associates with the nuclear mitotic apparatus. Binds calmodulin, CPAP and DLG1. Also found to associate with contractile apparatus and tight junctions. Interacts with NUMA1; this interaction is negatively regulated by CDK1 during metaphase and promotes for anaphase-specific localization of NUMA1 in symmetrically dividing cells. Interacts with ATP2B1; regulates small intestinal calcium absorption through regulation of membrane expression of ATP2B1. O-glycosylated; contains N-acetylglucosamine side chains in the C-terminal domain. Post-translationally, phosphorylated at multiple sites by different protein kinases and each phosphorylation event selectively modulates the protein's functions.

It is found in the nucleus. The protein localises to the cytoplasm. Its subcellular location is the cytoskeleton. The protein resides in the cell cortex. In terms of biological role, protein 4.1 is a major structural element of the erythrocyte membrane skeleton. It plays a key role in regulating membrane physical properties of mechanical stability and deformability by stabilizing spectrin-actin interaction. Recruits DLG1 to membranes. Required for dynein-dynactin complex and NUMA1 recruitment at the mitotic cell cortex during anaphase. This Canis lupus familiaris (Dog) protein is Protein 4.1.